Here is a 175-residue protein sequence, read N- to C-terminus: Crossover junction endodeoxyribonuclease RuvC (175 aa).

Catalysis depends on residues Asp-8, Glu-69, and Asp-141. Positions 8, 69, and 141 each coordinate Mg(2+).

The protein belongs to the RuvC family. In terms of assembly, homodimer which binds Holliday junction (HJ) DNA. The HJ becomes 2-fold symmetrical on binding to RuvC with unstacked arms; it has a different conformation from HJ DNA in complex with RuvA. In the full resolvosome a probable DNA-RuvA(4)-RuvB(12)-RuvC(2) complex forms which resolves the HJ. It depends on Mg(2+) as a cofactor.

Its subcellular location is the cytoplasm. It catalyses the reaction Endonucleolytic cleavage at a junction such as a reciprocal single-stranded crossover between two homologous DNA duplexes (Holliday junction).. In terms of biological role, the RuvA-RuvB-RuvC complex processes Holliday junction (HJ) DNA during genetic recombination and DNA repair. Endonuclease that resolves HJ intermediates. Cleaves cruciform DNA by making single-stranded nicks across the HJ at symmetrical positions within the homologous arms, yielding a 5'-phosphate and a 3'-hydroxyl group; requires a central core of homology in the junction. The consensus cleavage sequence is 5'-(A/T)TT(C/G)-3'. Cleavage occurs on the 3'-side of the TT dinucleotide at the point of strand exchange. HJ branch migration catalyzed by RuvA-RuvB allows RuvC to scan DNA until it finds its consensus sequence, where it cleaves and resolves the cruciform DNA. The sequence is that of Crossover junction endodeoxyribonuclease RuvC from Colwellia psychrerythraea (strain 34H / ATCC BAA-681) (Vibrio psychroerythus).